We begin with the raw amino-acid sequence, 249 residues long: Probable septum site-determining protein MinC (249 aa).

The disordered stretch occupies residues 117 to 138; the sequence is AVRPPQPPPPPHARAEPAAPVA.

Belongs to the MinC family. In terms of assembly, interacts with MinD and FtsZ.

Cell division inhibitor that blocks the formation of polar Z ring septums. Rapidly oscillates between the poles of the cell to destabilize FtsZ filaments that have formed before they mature into polar Z rings. Prevents FtsZ polymerization. The sequence is that of Probable septum site-determining protein MinC from Xanthomonas campestris pv. campestris (strain 8004).